A 365-amino-acid polypeptide reads, in one-letter code: Deoxyguanosinetriphosphate triphosphohydrolase-like protein (365 aa).

Residues Arg-52 to Val-187 form the HD domain.

It belongs to the dGTPase family. Type 2 subfamily.

The protein is Deoxyguanosinetriphosphate triphosphohydrolase-like protein of Wolinella succinogenes (strain ATCC 29543 / DSM 1740 / CCUG 13145 / JCM 31913 / LMG 7466 / NCTC 11488 / FDC 602W) (Vibrio succinogenes).